Here is a 258-residue protein sequence, read N- to C-terminus: TLC domain-containing protein 4 A (258 aa).

7 consecutive transmembrane segments (helical) span residues 8–28 (YLIS…YIWI), 49–71 (IEWT…SCYC), 92–112 (FILK…IIYY), 118–138 (WPII…IGLY), 144–164 (LTLL…MKWF), 170–190 (LENH…FIFI), and 217–237 (IIFF…YLVI). The TLC domain occupies 46-245 (SSKIEWTNKI…VIKGILKHLS (200 aa)).

This sequence belongs to the TLCD4 family.

Its subcellular location is the membrane. This Dictyostelium discoideum (Social amoeba) protein is TLC domain-containing protein 4 A (tlcd4a).